Consider the following 1594-residue polypeptide: NAD-specific glutamate dehydrogenase (1594 aa).

Lysine 816 is an active-site residue.

Belongs to the Glu/Leu/Phe/Val dehydrogenases family. Interacts with (unphosphorylated) GarA.

The enzyme catalyses L-glutamate + NAD(+) + H2O = 2-oxoglutarate + NH4(+) + NADH + H(+). Activity is inhibited by unphosphorylated GarA. Stimulated by manganese and magnesium. In terms of biological role, catalyzes the reversible conversion of L-glutamate to 2-oxoglutarate. Highly specific for NAD. The chain is NAD-specific glutamate dehydrogenase (gdh) from Mycolicibacterium smegmatis (strain ATCC 700084 / mc(2)155) (Mycobacterium smegmatis).